A 622-amino-acid polypeptide reads, in one-letter code: Chaperone protein HscA homolog (622 aa).

Belongs to the heat shock protein 70 family.

Functionally, chaperone involved in the maturation of iron-sulfur cluster-containing proteins. Has a low intrinsic ATPase activity which is markedly stimulated by HscB. This chain is Chaperone protein HscA homolog, found in Verminephrobacter eiseniae (strain EF01-2).